We begin with the raw amino-acid sequence, 442 residues long: Glycolipid 2-alpha-mannosyltransferase (442 aa).

The Cytoplasmic segment spans residues 1 to 11; it reads MALFLSKRLLR. The helical; Signal-anchor for type II membrane protein transmembrane segment at 12–30 threads the bilayer; sequence FTVIAGAVIVLLLTLNSNS. Residues 31–118 form a stem region region; that stretch reads RTQQYIPSSI…YITPSFANKA (88 aa). Residues 31 to 442 lie on the Lumenal side of the membrane; that stretch reads RTQQYIPSSI…KPKNWKKFRE (412 aa). The interval 68-95 is disordered; sequence EQSALNSEASEDSEAMDEESKALKAAAE. Residues 85–95 are compositionally biased toward basic and acidic residues; it reads EESKALKAAAE. Residues 119 to 442 are catalytic; that stretch reads GKPKACYVTL…KPKNWKKFRE (324 aa). An N-linked (GlcNAc...) asparagine glycan is attached at asparagine 197. Glutamate 329 functions as the Nucleophile in the catalytic mechanism.

Belongs to the glycosyltransferase 15 family. Mn(2+) is required as a cofactor.

It localises to the golgi apparatus membrane. Its pathway is protein modification; protein glycosylation. Its function is as follows. Mannosyltransferase that transfers an alpha-D-mannosyl residue from GDP-mannose into lipid-linked oligosaccharide, forming an alpha-(1-&gt;2)-D-mannosyl-D-mannose linkage. Required for the attachment of the third mannose residue of O-linked saccharides. This is Glycolipid 2-alpha-mannosyltransferase (KRE2) from Saccharomyces cerevisiae (strain ATCC 204508 / S288c) (Baker's yeast).